We begin with the raw amino-acid sequence, 486 residues long: Matrilin-3 (486 aa).

The first 28 residues, 1-28 (MPRPAPARRLPGLLLLLWPLLLLPSAAP), serve as a signal peptide directing secretion. Positions 32–75 (ARPGFRRLETRGPGGSPGRRPSPAAPDGAPASGTSEPGRARGAG) are disordered. Over residues 49–64 (GRRPSPAAPDGAPASG) the composition is skewed to low complexity. The 176-residue stretch at 83 to 258 (DLVFIIDSSR…GVIEKLSSRF (176 aa)) folds into the VWFA domain. Arg-198 carries the omega-N-methylarginine modification. 4 consecutive EGF-like domains span residues 264 to 305 (ALDP…KTCS), 306 to 347 (ALDR…KTCS), 348 to 389 (AQDK…KTCS), and 390 to 431 (VRDK…KTCS). Disulfide bonds link Cys-268–Cys-279, Cys-275–Cys-289, Cys-291–Cys-304, Cys-310–Cys-321, Cys-317–Cys-331, Cys-333–Cys-346, Cys-352–Cys-363, Cys-359–Cys-373, Cys-375–Cys-388, Cys-394–Cys-405, Cys-401–Cys-415, and Cys-417–Cys-430. Position 441 is a phosphoserine; by FAM20C (Ser-441). Position 442 is a phosphothreonine; by FAM20C (Thr-442). Residues 456-480 (DKVSSYLQRLNTKLDDILEKLKINE) are a coiled coil.

As to quaternary structure, can form homooligomers (monomers, dimers, trimers and tetramers) and heterooligomers with matrilin-1. Interacts with COMP. Component of a complex containing at least CRELD2, MANF, MATN3 and PDIA4. In terms of tissue distribution, expressed only in cartilaginous tissues, such as vertebrae, ribs and shoulders.

The protein localises to the secreted. In terms of biological role, major component of the extracellular matrix of cartilage and may play a role in the formation of extracellular filamentous networks. The sequence is that of Matrilin-3 (MATN3) from Homo sapiens (Human).